We begin with the raw amino-acid sequence, 304 residues long: Sulfate adenylyltransferase subunit 2 2 (304 aa).

The protein belongs to the PAPS reductase family. CysD subfamily. Heterodimer composed of CysD, the smaller subunit, and CysN.

It catalyses the reaction sulfate + ATP + H(+) = adenosine 5'-phosphosulfate + diphosphate. It functions in the pathway sulfur metabolism; hydrogen sulfide biosynthesis; sulfite from sulfate: step 1/3. Its function is as follows. With CysN forms the ATP sulfurylase (ATPS) that catalyzes the adenylation of sulfate producing adenosine 5'-phosphosulfate (APS) and diphosphate, the first enzymatic step in sulfur assimilation pathway. APS synthesis involves the formation of a high-energy phosphoric-sulfuric acid anhydride bond driven by GTP hydrolysis by CysN coupled to ATP hydrolysis by CysD. The chain is Sulfate adenylyltransferase subunit 2 2 from Marinobacter nauticus (strain ATCC 700491 / DSM 11845 / VT8) (Marinobacter aquaeolei).